The primary structure comprises 143 residues: Transthyretin-like protein 33 (143 aa).

The signal sequence occupies residues 1 to 20 (MSRLACISSLFILCAIGSEA).

Belongs to the nematode transthyretin-like family. As to expression, expressed in head cells next to and anterior of the first pharyngeal bulb, the pharynx, and the hypodermis.

It localises to the secreted. Its function is as follows. Protects dopaminergic neurons from degeneration caused by oxidative stress. This is Transthyretin-like protein 33 from Caenorhabditis elegans.